The primary structure comprises 244 residues: 5-oxoprolinase subunit A (244 aa).

Belongs to the LamB/PxpA family. In terms of assembly, forms a complex composed of PxpA, PxpB and PxpC.

The catalysed reaction is 5-oxo-L-proline + ATP + 2 H2O = L-glutamate + ADP + phosphate + H(+). In terms of biological role, catalyzes the cleavage of 5-oxoproline to form L-glutamate coupled to the hydrolysis of ATP to ADP and inorganic phosphate. The chain is 5-oxoprolinase subunit A from Shigella dysenteriae serotype 1 (strain Sd197).